The primary structure comprises 199 residues: Recombination protein RecR (199 aa).

The C4-type zinc-finger motif lies at 58–73; it reads CSICCNITDTDPCSMC. The 96-residue stretch at 81-176 folds into the Toprim domain; that stretch reads SVICVVEDPR…KVTRIAHGLP (96 aa).

The protein belongs to the RecR family.

May play a role in DNA repair. It seems to be involved in an RecBC-independent recombinational process of DNA repair. It may act with RecF and RecO. The polypeptide is Recombination protein RecR (Clostridioides difficile (strain 630) (Peptoclostridium difficile)).